The sequence spans 649 residues: Macrolide export ATP-binding/permease protein MacB (649 aa).

In terms of domain architecture, ABC transporter spans 7–245; that stretch reads IELKNIVRRY…SSAQEVTPQL (239 aa). 43–50 provides a ligand contact to ATP; the sequence is GASGSGKS. The next 4 helical transmembrane spans lie at 276–296, 529–549, 582–602, and 612–632; these read LLTMLGIIIGIAAVVCVIALG, IAFISLVVGGIGVMNIMLVSV, LLGGMLGVLLSLLLGGLFSAF, and FSSFLIAFVCSSMIGMIFGYF.

This sequence belongs to the ABC transporter superfamily. Macrolide exporter (TC 3.A.1.122) family. In terms of assembly, homodimer. Part of the tripartite efflux system MacAB-TolC, which is composed of an inner membrane transporter, MacB, a periplasmic membrane fusion protein, MacA, and an outer membrane component, TolC. The complex forms a large protein conduit and can translocate molecules across both the inner and outer membranes. Interacts with MacA.

It is found in the cell inner membrane. Its function is as follows. Part of the tripartite efflux system MacAB-TolC. MacB is a non-canonical ABC transporter that contains transmembrane domains (TMD), which form a pore in the inner membrane, and an ATP-binding domain (NBD), which is responsible for energy generation. Confers resistance against macrolides. In Pasteurella multocida (strain Pm70), this protein is Macrolide export ATP-binding/permease protein MacB.